Here is a 198-residue protein sequence, read N- to C-terminus: Peptide deformylase (198 aa).

Fe cation-binding residues include C123 and H167. E168 is an active-site residue. H171 is a Fe cation binding site.

This sequence belongs to the polypeptide deformylase family. The cofactor is Fe(2+).

It catalyses the reaction N-terminal N-formyl-L-methionyl-[peptide] + H2O = N-terminal L-methionyl-[peptide] + formate. Functionally, removes the formyl group from the N-terminal Met of newly synthesized proteins. Requires at least a dipeptide for an efficient rate of reaction. N-terminal L-methionine is a prerequisite for activity but the enzyme has broad specificity at other positions. The sequence is that of Peptide deformylase from Ureaplasma parvum serovar 3 (strain ATCC 27815 / 27 / NCTC 11736).